Reading from the N-terminus, the 411-residue chain is Imidazolonepropionase (411 aa).

The Fe(3+) site is built by histidine 78 and histidine 80. Zn(2+) contacts are provided by histidine 78 and histidine 80. 4-imidazolone-5-propanoate is bound by residues arginine 87, tyrosine 150, and histidine 183. Tyrosine 150 is an N-formimidoyl-L-glutamate binding site. Histidine 248 contributes to the Fe(3+) binding site. Histidine 248 provides a ligand contact to Zn(2+). Residue glutamine 251 coordinates 4-imidazolone-5-propanoate. Aspartate 322 lines the Fe(3+) pocket. Aspartate 322 contacts Zn(2+). Residues asparagine 324 and glycine 326 each contribute to the N-formimidoyl-L-glutamate site. Serine 327 contributes to the 4-imidazolone-5-propanoate binding site.

Belongs to the metallo-dependent hydrolases superfamily. HutI family. Zn(2+) is required as a cofactor. Fe(3+) serves as cofactor.

Its subcellular location is the cytoplasm. It catalyses the reaction 4-imidazolone-5-propanoate + H2O = N-formimidoyl-L-glutamate. It participates in amino-acid degradation; L-histidine degradation into L-glutamate; N-formimidoyl-L-glutamate from L-histidine: step 3/3. Functionally, catalyzes the hydrolytic cleavage of the carbon-nitrogen bond in imidazolone-5-propanoate to yield N-formimidoyl-L-glutamate. It is the third step in the universal histidine degradation pathway. The sequence is that of Imidazolonepropionase from Flavobacterium johnsoniae (strain ATCC 17061 / DSM 2064 / JCM 8514 / BCRC 14874 / CCUG 350202 / NBRC 14942 / NCIMB 11054 / UW101) (Cytophaga johnsonae).